The following is a 328-amino-acid chain: Probable tRNA pseudouridine synthase B (328 aa).

Aspartate 71 functions as the Nucleophile in the catalytic mechanism. One can recognise a PUA domain in the interval 238–313 (LPKIWVRDSA…LVARVDRVIM (76 aa)).

The protein belongs to the pseudouridine synthase TruB family. Type 2 subfamily.

The catalysed reaction is uridine(55) in tRNA = pseudouridine(55) in tRNA. Functionally, could be responsible for synthesis of pseudouridine from uracil-55 in the psi GC loop of transfer RNAs. This Pyrobaculum islandicum (strain DSM 4184 / JCM 9189 / GEO3) protein is Probable tRNA pseudouridine synthase B.